We begin with the raw amino-acid sequence, 231 residues long: Small ribosomal subunit protein uS3 (231 aa).

The KH type-2 domain occupies 17-86 (VEKYLTKELK…SPQIEVQQVQ (70 aa)).

It belongs to the universal ribosomal protein uS3 family. Part of the 30S ribosomal subunit.

Binds the lower part of the 30S subunit head. The polypeptide is Small ribosomal subunit protein uS3 (Methanoregula boonei (strain DSM 21154 / JCM 14090 / 6A8)).